The sequence spans 658 residues: UvrABC system protein B (658 aa).

The 388-residue stretch at 26-413 (EGINSGKKKQ…SPEVIEQIIR (388 aa)) folds into the Helicase ATP-binding domain. 39–46 (GATGTGKT) provides a ligand contact to ATP. A Beta-hairpin motif is present at residues 92–115 (YYDYYQPEAYVPQTDTFIEKDAQI). Residues 430 to 596 (QIDDLLGEIQ…TIQKGVRDVI (167 aa)) form the Helicase C-terminal domain. The UVR domain maps to 622–657 (EKTIAKMEAEMKEAAKALDFERAAELRDLLLELKAE).

The protein belongs to the UvrB family. Forms a heterotetramer with UvrA during the search for lesions. Interacts with UvrC in an incision complex.

It is found in the cytoplasm. The UvrABC repair system catalyzes the recognition and processing of DNA lesions. A damage recognition complex composed of 2 UvrA and 2 UvrB subunits scans DNA for abnormalities. Upon binding of the UvrA(2)B(2) complex to a putative damaged site, the DNA wraps around one UvrB monomer. DNA wrap is dependent on ATP binding by UvrB and probably causes local melting of the DNA helix, facilitating insertion of UvrB beta-hairpin between the DNA strands. Then UvrB probes one DNA strand for the presence of a lesion. If a lesion is found the UvrA subunits dissociate and the UvrB-DNA preincision complex is formed. This complex is subsequently bound by UvrC and the second UvrB is released. If no lesion is found, the DNA wraps around the other UvrB subunit that will check the other stand for damage. This Bacillus cereus (strain ZK / E33L) protein is UvrABC system protein B.